The chain runs to 292 residues: Small ribosomal subunit biogenesis GTPase RsgA (292 aa).

The CP-type G domain maps to 64–221 (RSELFRPAVA…LVDTPGFSSL (158 aa)). Residues 113 to 116 (NKMD) and 164 to 172 (GPSGVGKST) contribute to the GTP site. Residues C245, C250, H252, and C258 each coordinate Zn(2+).

Belongs to the TRAFAC class YlqF/YawG GTPase family. RsgA subfamily. In terms of assembly, monomer. Associates with 30S ribosomal subunit, binds 16S rRNA. It depends on Zn(2+) as a cofactor.

The protein localises to the cytoplasm. Functionally, one of several proteins that assist in the late maturation steps of the functional core of the 30S ribosomal subunit. Helps release RbfA from mature subunits. May play a role in the assembly of ribosomal proteins into the subunit. Circularly permuted GTPase that catalyzes slow GTP hydrolysis, GTPase activity is stimulated by the 30S ribosomal subunit. The polypeptide is Small ribosomal subunit biogenesis GTPase RsgA (Clostridium botulinum (strain Loch Maree / Type A3)).